A 350-amino-acid chain; its full sequence is UDP-N-acetylenolpyruvoylglucosamine reductase (350 aa).

An FAD-binding PCMH-type domain is found at 25–194; that stretch reads VGPVARRLIT…LDVGGRSAPL (170 aa). R166 is an active-site residue. The active-site Proton donor is the S243. E342 is a catalytic residue.

It belongs to the MurB family. Requires FAD as cofactor.

Its subcellular location is the cytoplasm. The catalysed reaction is UDP-N-acetyl-alpha-D-muramate + NADP(+) = UDP-N-acetyl-3-O-(1-carboxyvinyl)-alpha-D-glucosamine + NADPH + H(+). It participates in cell wall biogenesis; peptidoglycan biosynthesis. Its function is as follows. Cell wall formation. In Mycobacterium sp. (strain MCS), this protein is UDP-N-acetylenolpyruvoylglucosamine reductase.